A 409-amino-acid chain; its full sequence is tRNA(Met) cytidine acetate ligase (409 aa).

Residues 7–20 (VVEY…HLYH), G102, N169, and R194 each bind ATP.

The protein belongs to the TmcAL family.

It is found in the cytoplasm. It carries out the reaction cytidine(34) in elongator tRNA(Met) + acetate + ATP = N(4)-acetylcytidine(34) in elongator tRNA(Met) + AMP + diphosphate. Functionally, catalyzes the formation of N(4)-acetylcytidine (ac(4)C) at the wobble position of elongator tRNA(Met), using acetate and ATP as substrates. First activates an acetate ion to form acetyladenylate (Ac-AMP) and then transfers the acetyl group to tRNA to form ac(4)C34. This chain is tRNA(Met) cytidine acetate ligase, found in Clostridium botulinum (strain Okra / Type B1).